The following is a 418-amino-acid chain: L-glutamine:2-deoxy-scyllo-inosose aminotransferase (418 aa).

At lysine 192 the chain carries N6-(pyridoxal phosphate)lysine.

The protein belongs to the DegT/DnrJ/EryC1 family. L-glutamine:2-deoxy-scyllo-inosose/scyllo-inosose aminotransferase subfamily. It depends on pyridoxal 5'-phosphate as a cofactor.

It catalyses the reaction 2-deoxy-L-scyllo-inosose + L-glutamine = 2-deoxy-scyllo-inosamine + 2-oxoglutaramate. It carries out the reaction 3-amino-2,3-dideoxy-scyllo-inosose + L-glutamine = 2-deoxystreptamine + 2-oxoglutaramate. The protein operates within metabolic intermediate biosynthesis; 2-deoxystreptamine biosynthesis; 2-deoxystreptamine from D-glucose 6-phosphate: step 2/4. It functions in the pathway metabolic intermediate biosynthesis; 2-deoxystreptamine biosynthesis; 2-deoxystreptamine from D-glucose 6-phosphate: step 4/4. Its pathway is antibiotic biosynthesis; butirosin biosynthesis. Its function is as follows. Catalyzes the PLP-dependent transamination of 2-deoxy-scyllo-inosose (2-DOI) to form 2-deoxy-scyllo-inosamine (2-DOIA) using L-glutamine as the amino donor. Also catalyzes the transamination of 3-amino-2,3-dideoxy-scyllo-inosose (keto-2-DOIA) into 2-deoxystreptamine (2-DOS). This chain is L-glutamine:2-deoxy-scyllo-inosose aminotransferase (btrR), found in Niallia circulans (Bacillus circulans).